The following is a 66-amino-acid chain: Large ribosomal subunit protein bL35 (66 aa).

It belongs to the bacterial ribosomal protein bL35 family.

In Ruegeria sp. (strain TM1040) (Silicibacter sp.), this protein is Large ribosomal subunit protein bL35.